Reading from the N-terminus, the 452-residue chain is Elongation factor Tu, mitochondrial (452 aa).

The transit peptide at 1–43 directs the protein to the mitochondrion; sequence MAAATLLRATPRFSGLCASPTPFLQGRLRPLKAPASPFLCRGL. The tr-type G domain maps to 55–251; it reads KPHVNVGTIG…AVDTYIPVPT (197 aa). Residues 64–71 are G1; that stretch reads GHVDHGKT. D67, G69, K70, T71, and T72 together coordinate GTP. Mg(2+) is bound at residue T71. At K79 the chain carries N6-acetyllysine. N6-acetyllysine; alternate is present on K88. The residue at position 88 (K88) is an N6-succinyllysine; alternate. A G2 region spans residues 105 to 109; the sequence is GITIN. The tract at residues 126-129 is G3; sequence DCPG. Residues N181, D184, S219, A220, and L221 each coordinate GTP. Residues 181-184 form a G4 region; it reads NKAD. The G5 stretch occupies residues 219 to 221; the sequence is SAL. K234 is modified (N6-succinyllysine). The residue at position 256 (K256) is an N6-acetyllysine. Residue T278 is modified to Phosphothreonine. K286 bears the N6-succinyllysine mark. At S312 the chain carries Phosphoserine. Residues K361 and K418 each carry the N6-acetyllysine modification.

The protein belongs to the TRAFAC class translation factor GTPase superfamily. Classic translation factor GTPase family. EF-Tu/EF-1A subfamily. Interacts with NLRX1. Interacts with ATG16L1.

Its subcellular location is the mitochondrion. The enzyme catalyses GTP + H2O = GDP + phosphate + H(+). GTP hydrolase that promotes the GTP-dependent binding of aminoacyl-tRNA to the A-site of ribosomes during protein biosynthesis. Also plays a role in the regulation of autophagy and innate immunity. Recruits ATG5-ATG12 and NLRX1 at mitochondria and serves as a checkpoint of the RIGI-MAVS pathway. In turn, inhibits RLR-mediated type I interferon while promoting autophagy. This Mus musculus (Mouse) protein is Elongation factor Tu, mitochondrial (Tufm).